The chain runs to 450 residues: Serine--tRNA ligase, cytoplasmic (450 aa).

238-240 is an L-serine binding site; that stretch reads TSE. ATP contacts are provided by residues 271-273 and valine 287; that span reads RRE. Glutamate 294 is a binding site for L-serine. Residue 358–361 participates in ATP binding; sequence ELVS. Threonine 396 contacts L-serine.

It belongs to the class-II aminoacyl-tRNA synthetase family. Type-1 seryl-tRNA synthetase subfamily. In terms of assembly, homodimer. The tRNA molecule binds across the dimer.

It localises to the cytoplasm. Its subcellular location is the cytosol. It catalyses the reaction tRNA(Ser) + L-serine + ATP = L-seryl-tRNA(Ser) + AMP + diphosphate + H(+). Catalyzes the attachment of serine to tRNA(Ser) in a two-step reaction: serine is first activated by ATP to form Ser-AMP and then transferred to the acceptor end of tRNA(Ser). The protein is Serine--tRNA ligase, cytoplasmic of Schizosaccharomyces pombe (strain 972 / ATCC 24843) (Fission yeast).